The following is a 137-amino-acid chain: Small heat shock protein IbpA (137 aa).

The sHSP domain maps to 28–137 (SQSNGGYPPY…ANKPRRIEIN (110 aa)).

Belongs to the small heat shock protein (HSP20) family. As to quaternary structure, monomer. Forms homomultimers of about 100-150 subunits at optimal growth temperatures. Conformation changes to monomers at high temperatures or high ionic concentrations.

The protein resides in the cytoplasm. Its function is as follows. Associates with aggregated proteins, together with IbpB, to stabilize and protect them from irreversible denaturation and extensive proteolysis during heat shock and oxidative stress. Aggregated proteins bound to the IbpAB complex are more efficiently refolded and reactivated by the ATP-dependent chaperone systems ClpB and DnaK/DnaJ/GrpE. Its activity is ATP-independent. The protein is Small heat shock protein IbpA of Klebsiella pneumoniae (strain 342).